Reading from the N-terminus, the 225-residue chain is ATP-dependent dethiobiotin synthetase BioD 1 (225 aa).

13 to 18 (EVGKTV) serves as a coordination point for ATP. Thr-17 contributes to the Mg(2+) binding site. Residue Lys-38 is part of the active site. Position 42 (Ser-42) interacts with substrate. Residues Asp-55, 116–119 (EGAG), 176–177 (ND), 205–207 (PWL), and Glu-212 each bind ATP. Asp-55 and Glu-116 together coordinate Mg(2+).

Belongs to the dethiobiotin synthetase family. As to quaternary structure, homodimer. Requires Mg(2+) as cofactor.

It localises to the cytoplasm. The enzyme catalyses (7R,8S)-7,8-diammoniononanoate + CO2 + ATP = (4R,5S)-dethiobiotin + ADP + phosphate + 3 H(+). It participates in cofactor biosynthesis; biotin biosynthesis; biotin from 7,8-diaminononanoate: step 1/2. Functionally, catalyzes a mechanistically unusual reaction, the ATP-dependent insertion of CO2 between the N7 and N8 nitrogen atoms of 7,8-diaminopelargonic acid (DAPA, also called 7,8-diammoniononanoate) to form a ureido ring. The sequence is that of ATP-dependent dethiobiotin synthetase BioD 1 from Escherichia coli O157:H7.